Here is a 107-residue protein sequence, read N- to C-terminus: Wound-induced proteinase inhibitor 1 (107 aa).

The first 23 residues, 1–23 (MESKFAHIIVFFLLATSFETLLA), serve as a signal peptide directing secretion. Residues 24-36 (RKESDGPEVIELQ) constitute a propeptide that is removed on maturation.

This sequence belongs to the protease inhibitor I13 (potato type I serine protease inhibitor) family. In terms of assembly, heterogeneous tetramers of similar chains.

Functionally, inhibits both chymotrypsin and trypsin. The polypeptide is Wound-induced proteinase inhibitor 1 (Solanum tuberosum (Potato)).